Reading from the N-terminus, the 267-residue chain is Large ribosomal subunit protein uL4 (267 aa).

This sequence belongs to the universal ribosomal protein uL4 family. Part of the 50S ribosomal subunit.

Functionally, one of the primary rRNA binding proteins, this protein initially binds near the 5'-end of the 23S rRNA. It is important during the early stages of 50S assembly. It makes multiple contacts with different domains of the 23S rRNA in the assembled 50S subunit and ribosome. In terms of biological role, forms part of the polypeptide exit tunnel. The polypeptide is Large ribosomal subunit protein uL4 (Saccharolobus islandicus (strain L.S.2.15 / Lassen #1) (Sulfolobus islandicus)).